A 393-amino-acid polypeptide reads, in one-letter code: Rhizopuspepsin (393 aa).

A signal peptide spans 1–21 (MKFTLISSCIAIAALAVAVDA). A propeptide spans 22–68 (APGEKKISIPLAKNPNYKPSAKNAIQKAIAKYNKHKINTSTGGIVPD) (activation peptide). One can recognise a Peptidase A1 domain in the interval 85–389 (YYGQVTIGTP…NQGVPEVQIA (305 aa)). Asp-103 is a catalytic residue. A disulfide bridge links Cys-116 with Cys-119. Asp-286 is a catalytic residue. Cys-320 and Cys-353 are joined by a disulfide.

This sequence belongs to the peptidase A1 family.

It catalyses the reaction Hydrolysis of proteins with broad specificity similar to that of pepsin A, preferring hydrophobic residues at P1 and P1'. Clots milk and activates trypsinogen. Does not cleave 4-Gln-|-His-5, but does cleave 10-His-|-Leu-11 and 12-Val-|-Glu-13 in B chain of insulin.. This is Rhizopuspepsin from Rhizopus chinensis (Bread mold).